The following is a 565-amino-acid chain: Dihydroxy-acid dehydratase (565 aa).

Residue Asp83 coordinates Mg(2+). Cys124 contributes to the [2Fe-2S] cluster binding site. Mg(2+)-binding residues include Asp125 and Lys126. Lys126 carries the N6-carboxylysine modification. Cys197 is a binding site for [2Fe-2S] cluster. Glu451 contributes to the Mg(2+) binding site. Ser477 acts as the Proton acceptor in catalysis.

Belongs to the IlvD/Edd family. Homodimer. It depends on [2Fe-2S] cluster as a cofactor. Requires Mg(2+) as cofactor.

The enzyme catalyses (2R)-2,3-dihydroxy-3-methylbutanoate = 3-methyl-2-oxobutanoate + H2O. The catalysed reaction is (2R,3R)-2,3-dihydroxy-3-methylpentanoate = (S)-3-methyl-2-oxopentanoate + H2O. It functions in the pathway amino-acid biosynthesis; L-isoleucine biosynthesis; L-isoleucine from 2-oxobutanoate: step 3/4. Its pathway is amino-acid biosynthesis; L-valine biosynthesis; L-valine from pyruvate: step 3/4. In terms of biological role, functions in the biosynthesis of branched-chain amino acids. Catalyzes the dehydration of (2R,3R)-2,3-dihydroxy-3-methylpentanoate (2,3-dihydroxy-3-methylvalerate) into 2-oxo-3-methylpentanoate (2-oxo-3-methylvalerate) and of (2R)-2,3-dihydroxy-3-methylbutanoate (2,3-dihydroxyisovalerate) into 2-oxo-3-methylbutanoate (2-oxoisovalerate), the penultimate precursor to L-isoleucine and L-valine, respectively. The sequence is that of Dihydroxy-acid dehydratase from Symbiobacterium thermophilum (strain DSM 24528 / JCM 14929 / IAM 14863 / T).